A 154-amino-acid chain; its full sequence is Myoglobin (154 aa).

The 147-residue stretch at 2–148 (GLSDGEWHLV…FRNDIAAKYK (147 aa)) folds into the Globin domain. A Phosphoserine modification is found at S4. A nitrite-binding site is contributed by H65. H65 serves as a coordination point for O2. The residue at position 68 (T68) is a Phosphothreonine. Residue H94 coordinates heme b.

Belongs to the globin family. As to quaternary structure, monomeric.

The protein resides in the cytoplasm. Its subcellular location is the sarcoplasm. The enzyme catalyses Fe(III)-heme b-[protein] + nitric oxide + H2O = Fe(II)-heme b-[protein] + nitrite + 2 H(+). It catalyses the reaction H2O2 + AH2 = A + 2 H2O. Functionally, monomeric heme protein which primary function is to store oxygen and facilitate its diffusion within muscle tissues. Reversibly binds oxygen through a pentacoordinated heme iron and enables its timely and efficient release as needed during periods of heightened demand. Depending on the oxidative conditions of tissues and cells, and in addition to its ability to bind oxygen, it also has a nitrite reductase activity whereby it regulates the production of bioactive nitric oxide. Under stress conditions, like hypoxia and anoxia, it also protects cells against reactive oxygen species thanks to its pseudoperoxidase activity. This is Myoglobin (MB) from Halichoerus grypus (Gray seal).